Here is a 228-residue protein sequence, read N- to C-terminus: Cytochrome b5 domain-containing protein 1 (228 aa).

The Cytochrome b5 heme-binding domain occupies 17–83 (RRYFTPAEVA…DPKTRDIRKH (67 aa)). Residues Tyr52 and His83 each contribute to the heme site.

Belongs to the cytochrome b5 family.

The protein resides in the cytoplasm. Its subcellular location is the cytoskeleton. The protein localises to the cilium axoneme. Radial spoke stalk protein that binds heme under oxidizing conditions. Required for the coordinated beating of multiple cilia maybe by functioning in a redox signaling pathway. The protein is Cytochrome b5 domain-containing protein 1 of Homo sapiens (Human).